A 319-amino-acid polypeptide reads, in one-letter code: Thioredoxin reductase (319 aa).

FAD is bound by residues 11–14 (SGPA), 40–41 (IA), Gln-45, Asn-54, Cys-145, Asp-288, and 295–297 (RQA). An intrachain disulfide couples Cys-142 to Cys-145.

The protein belongs to the class-II pyridine nucleotide-disulfide oxidoreductase family. As to quaternary structure, homodimer. FAD is required as a cofactor.

The protein localises to the cytoplasm. It catalyses the reaction [thioredoxin]-dithiol + NADP(+) = [thioredoxin]-disulfide + NADPH + H(+). In Candida glabrata (strain ATCC 2001 / BCRC 20586 / JCM 3761 / NBRC 0622 / NRRL Y-65 / CBS 138) (Yeast), this protein is Thioredoxin reductase (TRR1).